A 115-amino-acid chain; its full sequence is NADH-ubiquinone oxidoreductase chain 3 (115 aa).

The next 3 helical transmembrane spans lie at 3-23 (LVIA…VAFW), 55-75 (FFLV…LLPI), and 87-107 (LLSL…YEWL).

It belongs to the complex I subunit 3 family. Core subunit of respiratory chain NADH dehydrogenase (Complex I) which is composed of 45 different subunits. Interacts with TMEM186. Interacts with TMEM242.

Its subcellular location is the mitochondrion inner membrane. The catalysed reaction is a ubiquinone + NADH + 5 H(+)(in) = a ubiquinol + NAD(+) + 4 H(+)(out). In terms of biological role, core subunit of the mitochondrial membrane respiratory chain NADH dehydrogenase (Complex I) which catalyzes electron transfer from NADH through the respiratory chain, using ubiquinone as an electron acceptor. Essential for the catalytic activity of complex I. This chain is NADH-ubiquinone oxidoreductase chain 3, found in Ornithorhynchus anatinus (Duckbill platypus).